A 395-amino-acid polypeptide reads, in one-letter code: L-methionine gamma-lyase (395 aa).

Pyridoxal 5'-phosphate-binding positions include 56-58 and 86-87; these read YTR and GM. Y111 is a binding site for substrate. 206 to 208 lines the pyridoxal 5'-phosphate pocket; the sequence is SVT. At K209 the chain carries N6-(pyridoxal phosphate)lysine. R373 provides a ligand contact to substrate.

It belongs to the trans-sulfuration enzymes family. L-methionine gamma-lyase subfamily. Homotetramer. The cofactor is pyridoxal 5'-phosphate.

The catalysed reaction is L-methionine + H2O = methanethiol + 2-oxobutanoate + NH4(+). It catalyses the reaction L-homocysteine + H2O = 2-oxobutanoate + hydrogen sulfide + NH4(+) + H(+). Its function is as follows. Catalyzes the alpha,gamma-elimination of L-methionine to produce methanethiol, 2-oxobutanoate and ammonia; methanethiol (methyl mercaptan) is considered to be one of the main causes of the oral malodor associated with periodontitis. Also displays homocysteine desulfhydrase activity, degrading homocysteine to produce hydrogen sulfide, 2-oxobutanoate and ammonia. L-cysteine and S-methyl-L-cysteine are poor substrates for the enzyme. Plays an important role in the resistance of F.nucleatum to the antibacterial agent 3-chloro-DL-alanine (3CA), thanks to its 3CA chloride-lyase (deaminating) activity. This is L-methionine gamma-lyase from Fusobacterium nucleatum subsp. polymorphum (Fusobacterium polymorphum).